The primary structure comprises 194 residues: E3 ubiquitin-protein ligase RNF4 (194 aa).

Positions 1-12 (MSTRNPQRKRRG) are enriched in basic residues. The tract at residues 1–20 (MSTRNPQRKRRGGAVNSRQT) is required for ubiquitination activity. Residues 1–36 (MSTRNPQRKRRGGAVNSRQTQKRTRETTSTPEISLE) are disordered. Positions 6–65 (PQRKRRGGAVNSRQTQKRTRETTSTPEISLEAEPIELVETVGDEIVDLTCESLEPVVVDL) are mediates interaction with TRPS1. 4 consecutive short sequence motifs (SUMO interaction motif) follow at residues 40–43 (IELV), 50–53 (IVDL), 61–63 (VVV), and 71–74 (VVIV). Phosphoserine is present on residues serine 98 and serine 99. 8 residues coordinate Zn(2+): cysteine 136, cysteine 139, cysteine 158, histidine 160, cysteine 163, cysteine 166, cysteine 177, and cysteine 180. The RING-type zinc finger occupies 136–181 (CPICMDGYSEIVQNGRLIVSTECGHVFCSQCLRDSLKNANTCPTCR).

As to quaternary structure, homodimer (via RING-type zinc finger domain). Interacts with GSC2. Interacts with AR/the androgen receptor and TBP. Interacts with TCF20. Interacts with PATZ1. Interacts with TRPS1; negatively regulates TRPS1 transcriptional repressor activity. Interacts with PML (isoform PML-1, isoform PML-2, isoform PML-3, isoform PML-4, isoform PML-5 and isoform PML-6). Interacts with PRDM1/Blimp-1. Sumoylated; conjugated by one or two SUMO1 moieties. Post-translationally, autoubiquitinated. In terms of tissue distribution, widely expressed with highest levels in testis.

The protein resides in the cytoplasm. It localises to the nucleus. It is found in the nucleoplasm. The protein localises to the PML body. It catalyses the reaction S-ubiquitinyl-[E2 ubiquitin-conjugating enzyme]-L-cysteine + [acceptor protein]-L-lysine = [E2 ubiquitin-conjugating enzyme]-L-cysteine + N(6)-ubiquitinyl-[acceptor protein]-L-lysine.. Its pathway is protein modification; protein ubiquitination. In terms of biological role, E3 ubiquitin-protein ligase which binds polysumoylated chains covalently attached to proteins and mediates 'Lys-6'-, 'Lys-11'-, 'Lys-48'- and 'Lys-63'-linked polyubiquitination of those substrates and their subsequent targeting to the proteasome for degradation. Regulates the degradation of several proteins including PML and the transcriptional activator PEA3. Involved in chromosome alignment and spindle assembly, it regulates the kinetochore CENPH-CENPI-CENPK complex by targeting polysumoylated CENPI to proteasomal degradation. Regulates the cellular responses to hypoxia and heat shock through degradation of respectively EPAS1 and PARP1. Alternatively, it may also bind DNA/nucleosomes and have a more direct role in the regulation of transcription for instance enhancing basal transcription and steroid receptor-mediated transcriptional activation. Catalyzes ubiquitination of sumoylated PARP1 in response to PARP1 trapping to chromatin, leading to PARP1 removal from chromatin by VCP/p97. This chain is E3 ubiquitin-protein ligase RNF4, found in Rattus norvegicus (Rat).